The following is a 302-amino-acid chain: Phospho-N-acetylmuramoyl-pentapeptide-transferase (302 aa).

10 helical membrane-spanning segments follow: residues 1 to 21 (MIAA…KLFR), 42 to 62 (GTPT…GMIS), 67 to 87 (MVLL…FLSV), 95 to 115 (LKTY…LLLI), 123 to 143 (FFGS…LVIV), 154 to 174 (GLDG…WFFL), 178 to 198 (GVSE…LVFN), 204 to 224 (IFMG…VSVL), 229 to 249 (FYLV…ILQV), and 279 to 299 (IVAV…EIFG).

This sequence belongs to the glycosyltransferase 4 family. MraY subfamily. It depends on Mg(2+) as a cofactor.

Its subcellular location is the cell inner membrane. It catalyses the reaction UDP-N-acetyl-alpha-D-muramoyl-L-alanyl-gamma-D-glutamyl-meso-2,6-diaminopimeloyl-D-alanyl-D-alanine + di-trans,octa-cis-undecaprenyl phosphate = di-trans,octa-cis-undecaprenyl diphospho-N-acetyl-alpha-D-muramoyl-L-alanyl-D-glutamyl-meso-2,6-diaminopimeloyl-D-alanyl-D-alanine + UMP. Its pathway is cell wall biogenesis; peptidoglycan biosynthesis. Catalyzes the initial step of the lipid cycle reactions in the biosynthesis of the cell wall peptidoglycan: transfers peptidoglycan precursor phospho-MurNAc-pentapeptide from UDP-MurNAc-pentapeptide onto the lipid carrier undecaprenyl phosphate, yielding undecaprenyl-pyrophosphoryl-MurNAc-pentapeptide, known as lipid I. The chain is Phospho-N-acetylmuramoyl-pentapeptide-transferase from Thermotoga maritima (strain ATCC 43589 / DSM 3109 / JCM 10099 / NBRC 100826 / MSB8).